Consider the following 343-residue polypeptide: Squamosa promoter-binding-like protein 11 (343 aa).

The segment at 1 to 48 (MECNPVSSTTSSSLLWDWDATASAEPPPPPGKRGGRDSSSASASAKRG) is disordered. Low complexity-rich tracts occupy residues 7-19 (SSTT…WDWD) and 37-48 (DSSSASASAKRG). The SBP-type zinc finger occupies 64–141 (APRCQVEGCG…SDHNARRRKP (78 aa)). Positions 67, 72, 89, 92, 108, 111, 115, and 127 each coordinate Zn(2+). The short motif at 124-140 (KRSCRRRLSDHNARRRK) is the Bipartite nuclear localization signal element.

As to expression, expressed in stems, leaf sheaths, and young panicles.

It localises to the nucleus. Trans-acting factor that binds specifically to the consensus nucleotide sequence 5'-TNCGTACAA-3'. May be involved in panicle development. In Oryza sativa subsp. japonica (Rice), this protein is Squamosa promoter-binding-like protein 11 (SPL11).